The following is a 250-amino-acid chain: Probable transcriptional regulatory protein ROP_68700 (250 aa).

This sequence belongs to the TACO1 family.

It localises to the cytoplasm. This is Probable transcriptional regulatory protein ROP_68700 from Rhodococcus opacus (strain B4).